The sequence spans 27 residues: Phospholipase A2 P-elapitoxin-Aa1a alpha chain (27 aa).

Belongs to the phospholipase A2 family. Group I subfamily. In terms of assembly, heterotrimer of alpha, beta and gamma chains, each related to PLA2. Ca(2+) is required as a cofactor. Expressed by the venom gland.

The protein localises to the secreted. The enzyme catalyses a 1,2-diacyl-sn-glycero-3-phosphocholine + H2O = a 1-acyl-sn-glycero-3-phosphocholine + a fatty acid + H(+). Heterotrimer: presynaptic neurotoxin. Inhibits nerve-evoked twitch contractions but not responses to cholinergic agonists acetylcholine and carbachol and to depolarizing agonist KCl. Causes a fade in tetanic contractions. Displays a triphasic mode of action with depression, enhancement and blockade of neurotransmission. Does not display myotoxic activity such as changes in baseline muscle tension or inhibition of directly stimulated muscle twitches. All subunits are necessary for maximum toxicity. Its function is as follows. Monomer: Snake venom phospholipase A2 (PLA2) alpha chain that has enzymatic activity. PLA2 catalyzes the calcium-dependent hydrolysis of the 2-acyl groups in 3-sn-phosphoglycerides. The protein is Phospholipase A2 P-elapitoxin-Aa1a alpha chain of Acanthophis antarcticus (Common death adder).